A 230-amino-acid polypeptide reads, in one-letter code: Large ribosomal subunit protein uL1 (230 aa).

This sequence belongs to the universal ribosomal protein uL1 family. Part of the 50S ribosomal subunit.

Its function is as follows. Binds directly to 23S rRNA. The L1 stalk is quite mobile in the ribosome, and is involved in E site tRNA release. Protein L1 is also a translational repressor protein, it controls the translation of the L11 operon by binding to its mRNA. This chain is Large ribosomal subunit protein uL1, found in Bacillus anthracis (strain A0248).